The chain runs to 292 residues: Protoheme IX farnesyltransferase (292 aa).

9 helical membrane passes run 11–31 (FGIV…GFQI), 37–57 (WKIF…SLAL), 85–105 (AAAG…LFKL), 108–128 (VAGW…TLWW), 133–153 (VFAA…GYAV), 163–183 (SLYL…VLAI), 199–219 (VALG…VYVG), 223–243 (AAPM…PFVF), and 261–281 (WLAF…IPVI).

It belongs to the UbiA prenyltransferase family. Protoheme IX farnesyltransferase subfamily.

The protein localises to the cell inner membrane. It catalyses the reaction heme b + (2E,6E)-farnesyl diphosphate + H2O = Fe(II)-heme o + diphosphate. It participates in porphyrin-containing compound metabolism; heme O biosynthesis; heme O from protoheme: step 1/1. Converts heme B (protoheme IX) to heme O by substitution of the vinyl group on carbon 2 of heme B porphyrin ring with a hydroxyethyl farnesyl side group. This chain is Protoheme IX farnesyltransferase, found in Bdellovibrio bacteriovorus (strain ATCC 15356 / DSM 50701 / NCIMB 9529 / HD100).